Here is a 95-residue protein sequence, read N- to C-terminus: Large ribosomal subunit protein bL27 (95 aa).

The propeptide occupies 1 to 12 (MLLIKKINLQFF). Positions 17–37 (GVGSTKNGRDSNPKYLGAKKS) are disordered.

The protein belongs to the bacterial ribosomal protein bL27 family. Post-translationally, the N-terminus is cleaved by ribosomal processing cysteine protease Prp.

The protein is Large ribosomal subunit protein bL27 of Malacoplasma penetrans (strain HF-2) (Mycoplasma penetrans).